The chain runs to 57 residues: Protein translocase subunit SecE (57 aa).

Residues 33-53 form a helical membrane-spanning segment; it reads GLGILLVGFIGFVIFSIMTFV.

Belongs to the SecE/SEC61-gamma family. In terms of assembly, component of the Sec protein translocase complex. Heterotrimer consisting of SecY (alpha), SecG (beta) and SecE (gamma) subunits. The heterotrimers can form oligomers, although 1 heterotrimer is thought to be able to translocate proteins. Interacts with the ribosome. May interact with SecDF, and other proteins may be involved.

The protein localises to the cell membrane. Its function is as follows. Essential subunit of the Sec protein translocation channel SecYEG. Clamps together the 2 halves of SecY. May contact the channel plug during translocation. The protein is Protein translocase subunit SecE of Natronomonas pharaonis (strain ATCC 35678 / DSM 2160 / CIP 103997 / JCM 8858 / NBRC 14720 / NCIMB 2260 / Gabara) (Halobacterium pharaonis).